The primary structure comprises 124 residues: Magnetosome protein MamC (124 aa).

The Cytoplasmic segment spans residues 2-8; that stretch reads PFHLAPY. A helical transmembrane segment spans residues 9–29; sequence LAKSVPGVGVLGALVGGAAAL. Residues 30–64 are Lumenal-facing; sequence AKNVRLLKEKRITNTEAAIDTGKETVGAGLATALS. An MIC, when fused with the C-terminus of maltose-binding protein (MBP) or expressed as a fragment, improves quality of iron particles during precipitation experiments, binds magnetite region spans residues 36–56; the sequence is LKEKRITNTEAAIDTGKETVG. Residues 65-85 form a helical membrane-spanning segment; the sequence is AVAATAVGGGLVVSLGTALVA. Residues 86 to 124 lie on the Cytoplasmic side of the membrane; that stretch reads GVAAKYAWDRGVDLVEKELNRGKAANGASDEDILRDELA.

It belongs to the magnetosome MamC family. As to quaternary structure, probably interacts with MamA.

The protein localises to the magnetosome membrane. Probably involved in magnetite crystal growth. The lumenal domain may bind the magnetite crystals, affecting crystal size and shape. The polypeptide is Magnetosome protein MamC (Paramagnetospirillum magneticum (strain ATCC 700264 / AMB-1) (Magnetospirillum magneticum)).